The following is a 308-amino-acid chain: Glycerol-3-phosphate dehydrogenase [NAD(P)+] (308 aa).

NADPH-binding residues include W15, R35, R36, and K83. Sn-glycerol 3-phosphate is bound by residues K83 and G111. S115 contributes to the NADPH binding site. The sn-glycerol 3-phosphate site is built by K166, D219, S229, R230, and N231. The Proton acceptor role is filled by K166. R230 is a binding site for NADPH. E256 lines the NADPH pocket.

The protein belongs to the NAD-dependent glycerol-3-phosphate dehydrogenase family.

It localises to the cytoplasm. The catalysed reaction is sn-glycerol 3-phosphate + NAD(+) = dihydroxyacetone phosphate + NADH + H(+). The enzyme catalyses sn-glycerol 3-phosphate + NADP(+) = dihydroxyacetone phosphate + NADPH + H(+). Its pathway is membrane lipid metabolism; glycerophospholipid metabolism. In terms of biological role, catalyzes the reduction of the glycolytic intermediate dihydroxyacetone phosphate (DHAP) to sn-glycerol 3-phosphate (G3P), the key precursor for phospholipid synthesis. The polypeptide is Glycerol-3-phosphate dehydrogenase [NAD(P)+] (Synechococcus elongatus (strain ATCC 33912 / PCC 7942 / FACHB-805) (Anacystis nidulans R2)).